A 559-amino-acid polypeptide reads, in one-letter code: MFQGGHQPIMVLNQNTKRESGKKAQLANISASKAVSEIVTSTLGPRSMLKMLLDPMGGIVMTNDGNAILREIDVNHPAAKSMIELARVQDEEVGDGTTSVIIMAGEMMSAAKPFIERDIHPSIIVTAYYRALEESIKKIEELAVPIDVNNDDQVNKALSSCIGTKFTSRWGKLITDLALKAVRTIMRGGNLQKLNLEIKRYAKVEKIPGGTLEDSVVLDGVMFNKDITHPKMRRFIKNPRVILLDCPLEYKKGESMTNLEMMKETDMTDALQQEMEELALMCNDILKHKPDVVITEKGVSDLAQHYLLKQNVSVIRRVRKTDNNRISRVSGATIVNRPEEIQESDVGKKCGLFEVKLIGDEYFTFMTECENPEACSIILRGASKDVLNEMERNLHDCLAVAKNIFVNPKLVPGGGAIEMEVSSHLEKISSSIEGLHQLPFRAVAYALEAIPKTLAQNCGVDVVRNITELRAKHNQEGNKFIGIEGNSGKITDMGEANVWEPIAVKLQVYKTAIESACMLLRIDDVVSGLKKQKVAKGGASVTDGNGQEIPETFGDARDG.

Residues Cys369 and Cys375 are joined by a disulfide bond. A disordered region spans residues 537–559 (GGASVTDGNGQEIPETFGDARDG).

The protein belongs to the TCP-1 chaperonin family. Heterooligomeric complex of about 850 to 900 kDa that forms two stacked rings, 12 to 16 nm in diameter.

Its subcellular location is the cytoplasm. Its function is as follows. Molecular chaperone; assists the folding of proteins upon ATP hydrolysis. Known to play a role, in vitro, in the folding of actin and tubulin. This chain is T-complex protein 1 subunit gamma, found in Tetrahymena pyriformis.